Here is a 218-residue protein sequence, read N- to C-terminus: 3,4-dihydroxy-2-butanone 4-phosphate synthase (218 aa).

D-ribulose 5-phosphate is bound by residues 38-39, Asp-43, 151-155, and Glu-175; these read RE and RRGHT. Glu-39 provides a ligand contact to Mg(2+). His-154 contributes to the Mg(2+) binding site.

This sequence belongs to the DHBP synthase family. Homodimer. Mg(2+) serves as cofactor. Requires Mn(2+) as cofactor.

The enzyme catalyses D-ribulose 5-phosphate = (2S)-2-hydroxy-3-oxobutyl phosphate + formate + H(+). It participates in cofactor biosynthesis; riboflavin biosynthesis; 2-hydroxy-3-oxobutyl phosphate from D-ribulose 5-phosphate: step 1/1. Its function is as follows. Catalyzes the conversion of D-ribulose 5-phosphate to formate and 3,4-dihydroxy-2-butanone 4-phosphate. This chain is 3,4-dihydroxy-2-butanone 4-phosphate synthase, found in Vibrio cholerae serotype O1 (strain ATCC 39541 / Classical Ogawa 395 / O395).